A 305-amino-acid polypeptide reads, in one-letter code: Axin interactor, dorsalization-associated protein A (305 aa).

Residues Gly-153–Asn-220 are axin-binding. The C2 Aida-type domain occupies Leu-156–Leu-303.

Belongs to the AIDA family.

Acts as a ventralizing factor during embryogenesis. Inhibits axin-mediated JNK activation by binding axin and disrupting axin homodimerization. This in turn antagonizes a Wnt/beta-catenin-independent dorsalization pathway activated by axin/JNK-signaling. This is Axin interactor, dorsalization-associated protein A (aida-a) from Xenopus laevis (African clawed frog).